A 647-amino-acid chain; its full sequence is Pre-mRNA-splicing factor SLU7 (647 aa).

Residues 1–19 are compositionally biased toward polar residues; that stretch reads MASYKQNLPPSALIKQQVN. A disordered region spans residues 1–44; the sequence is MASYKQNLPPSALIKQQVNVADKKSKAEVQRDRQLEEDRKAGTA. Basic and acidic residues predominate over residues 21–41; that stretch reads ADKKSKAEVQRDRQLEEDRKA. The segment at 113–130 adopts a CCHC-type zinc-finger fold; sequence GACENCGAMGHQKRDCFD. Disordered regions lie at residues 193–212 and 465–620; these read HEMK…APKD and EVKE…KEME. Residues 465–479 show a composition bias toward basic and acidic residues; that stretch reads EVKEEKEKEDSIKDE. Residues 480–491 show a composition bias toward acidic residues; that stretch reads VAEENSDNDNDE. A compositionally biased stretch (basic and acidic residues) spans 513–533; sequence EKEREKERLIEKERRERDQRR. Residues 534–555 show a composition bias toward basic residues; sequence RDKKREKRERKKAKLGKRKRRH. The span at 588 to 606 shows a compositional bias: basic and acidic residues; it reads EKAEGMKAAREGDRGRKYN.

It belongs to the SLU7 family.

It is found in the nucleus. Functionally, participates in the second catalytic step of pre-mRNA splicing, when the free hydroxyl group of exon I attacks the 3'-splice site to generate spliced mRNA and the excised lariat intron. This chain is Pre-mRNA-splicing factor SLU7, found in Caenorhabditis elegans.